The following is a 320-amino-acid chain: Myoblast determination protein 1 (320 aa).

Methionine 1 is covalently cross-linked (Peptide (Met-Gly) (interchain with G-Cter in ubiquitin)). Position 104 is an N6-methyllysine; by EHMT2 (lysine 104). A bHLH domain is found at 109-160 (DRRKAATMRERRRLSKVNEAFETLKRCTSSNPNQRLPKVEILRNAIRYIEGL). Disordered regions lie at residues 174-219 (AAAA…PPSG) and 262-320 (ESPA…YQVL). Composition is skewed to polar residues over residues 197 to 207 (SDASSPRSNCS) and 291 to 301 (GESSGDPTQSP).

Efficient DNA binding requires dimerization with another bHLH protein. Seems to form active heterodimers with ITF-2. Interacts with SUV39H1. Interacts with DDX5. Interacts with CHD2. Interacts with TSC22D3. Interacts with SETD3. Interacts with P-TEFB complex; promotes the transcriptional activity of MYOD1 through its CDK9-mediated phosphorylation. Interacts with CSRP3. Interacts with NUPR1. In terms of processing, phosphorylated by CDK9. This phosphorylation promotes its function in muscle differentiation. Acetylated by a complex containing EP300 and PCAF. The acetylation is essential to activate target genes. Conversely, its deacetylation by SIRT1 inhibits its function. Post-translationally, ubiquitinated on the N-terminus; which is required for proteasomal degradation. In terms of processing, methylation at Lys-104 by EHMT2/G9a inhibits myogenic activity.

The protein localises to the nucleus. Functionally, acts as a transcriptional activator that promotes transcription of muscle-specific target genes and plays a role in muscle differentiation. Together with MYF5 and MYOG, co-occupies muscle-specific gene promoter core region during myogenesis. Induces fibroblasts to differentiate into myoblasts. Interacts with and is inhibited by the twist protein. This interaction probably involves the basic domains of both proteins. In Homo sapiens (Human), this protein is Myoblast determination protein 1 (MYOD1).